We begin with the raw amino-acid sequence, 212 residues long: Ras-related protein Rab-15 (212 aa).

The GTP site is built by serine 17, glycine 18, valine 19, glycine 20, lysine 21, threonine 22, cysteine 23, serine 35, serine 39, and threonine 40. Threonine 22 serves as a coordination point for Mg(2+). 2 consecutive short sequence motifs (switch) follow at residues 31-45 (NEFHSSHISTIGVDF) and 63-80 (DTAGQERYQTITKQYYRR). The Mg(2+) site is built by threonine 40 and aspartate 63. GTP is bound by residues glycine 66, asparagine 121, lysine 122, aspartate 124, serine 151, and alanine 152. Residues cysteine 210 and cysteine 212 are each lipidated (S-geranylgeranyl cysteine). Cysteine 212 carries the cysteine methyl ester modification.

Belongs to the small GTPase superfamily. Rab family. The GTP bound form of RAB15 interacts with REP15. Interacts (GTP-bound form) with MICAL1, MICAL3, MICALCL, EHBP1 and EHBP1L1. It depends on Mg(2+) as a cofactor. As to expression, expressed predominantly in neural tissues.

It is found in the cell membrane. The catalysed reaction is GTP + H2O = GDP + phosphate + H(+). Its activity is regulated as follows. Regulated by guanine nucleotide exchange factors (GEFs) which promote the exchange of bound GDP for free GTP. Regulated by GTPase activating proteins (GAPs) which increase the GTP hydrolysis activity. Inhibited by GDP dissociation inhibitors (GDIs). Its function is as follows. The small GTPases Rab are key regulators of intracellular membrane trafficking, from the formation of transport vesicles to their fusion with membranes. Rabs cycle between an inactive GDP-bound form and an active GTP-bound form that is able to recruit to membranes different sets of downstream effectors directly responsible for vesicle formation, movement, tethering and fusion. RAB15 may act in concert with RAB3A in regulating aspects of synaptic vesicle membrane flow within the nerve terminal. The sequence is that of Ras-related protein Rab-15 from Rattus norvegicus (Rat).